Consider the following 392-residue polypeptide: AAA-ATPase At5g17750 (392 aa).

A helical transmembrane segment spans residues 13 to 35; it reads MFSTYASLAGYIMMIKPMIHTII. 227–234 is an ATP binding site; sequence GPPGTGKS.

This sequence belongs to the AAA ATPase family. BCS1 subfamily. It depends on Mg(2+) as a cofactor.

Its subcellular location is the membrane. The enzyme catalyses ATP + H2O = ADP + phosphate + H(+). This Arabidopsis thaliana (Mouse-ear cress) protein is AAA-ATPase At5g17750.